We begin with the raw amino-acid sequence, 482 residues long: Glycogen synthase (482 aa).

Position 18 (lysine 18) interacts with ADP-alpha-D-glucose.

Belongs to the glycosyltransferase 1 family. Bacterial/plant glycogen synthase subfamily.

The enzyme catalyses [(1-&gt;4)-alpha-D-glucosyl](n) + ADP-alpha-D-glucose = [(1-&gt;4)-alpha-D-glucosyl](n+1) + ADP + H(+). It functions in the pathway glycan biosynthesis; glycogen biosynthesis. In terms of biological role, synthesizes alpha-1,4-glucan chains using ADP-glucose. This is Glycogen synthase from Rhodopseudomonas palustris (strain HaA2).